The following is a 1089-amino-acid chain: SUMO-specific isopeptidase USPL1 (1089 aa).

The tract at residues 90–128 (LISPDSEDCPTPSKPQKRKRLETNCRNSPLPVHSKKTRS) is disordered. The region spanning 215–488 (VQWKNTQALC…ETHIVIWERK (274 aa)) is the USP domain. Cysteine 224 acts as the Nucleophile in catalysis. The segment at 224–483 (CWLDCILSAL…EVPASETHIV (260 aa)) is SUMO-binding. Histidine 444 serves as the catalytic Proton acceptor. Disordered regions lie at residues 687 to 739 (DSQT…KEDQ), 791 to 817 (ISRRSKRMSRKAKHMEELSPRNSSPPL), 835 to 868 (LREQEGSRPAPLRHRSPGNESAISPASRGDAAED), and 891 to 928 (LISSPHREPSLSDHSEPASHCGTPASDQSEPVSHCGSP). The span at 719–733 (TASSKTVAARSAQNQ) shows a compositional bias: polar residues. The segment covering 791-803 (ISRRSKRMSRKAK) has biased composition (basic residues). Serine 894 carries the phosphoserine modification. Residues 895–907 (PHREPSLSDHSEP) are compositionally biased toward basic and acidic residues.

It belongs to the peptidase C19 family. As to quaternary structure, interacts with ELL.

The protein resides in the nucleus. Its subcellular location is the cajal body. SUMO-specific isopeptidase involved in protein desumoylation. Specifically binds SUMO proteins with a higher affinity for SUMO2 and SUMO3 which it cleaves more efficiently. Also able to process full-length SUMO proteins to their mature forms. Plays a key role in RNA polymerase-II-mediated snRNA transcription in the Cajal bodies. Is a component of complexes that can bind to U snRNA genes. The chain is SUMO-specific isopeptidase USPL1 (Uspl1) from Mus musculus (Mouse).